Here is an 851-residue protein sequence, read N- to C-terminus: Envelope glycoprotein gp160 (851 aa).

The first 24 residues, 1–24 (MEPGRNQLLVAILLTSACLIYCKQ), serve as a signal peptide directing secretion. Residues 25 to 669 (YVTVFYGIPA…LTSWIKYIQY (645 aa)) lie on the Extracellular side of the membrane. N37 carries an N-linked (GlcNAc...) asparagine; by host glycan. A disulfide bridge links C44 with C57. N-linked (GlcNAc...) asparagine; by host glycosylation is found at N70, N114, N127, N134, N142, N157, N184, N195, N227, N230, N261, N267, N278, N289, N299, N355, N361, N388, N398, N401, N438, N453, and N456. 5 disulfides stabilise this stretch: C101-C203, C108-C194, C113-C154, C216-C246, and C226-C238. Residues 113–153 (CNITSGTTATPSPPNITIIDENSTCIGDNNCTGLGKEEVVE) are V1. A V2 region spans residues 154–194 (CEFNMTGLEQDKKRKYNDAWYSRDVVCDKTNGTGTCYMRHC). A V3 region spans residues 294–327 (CKRPGNKTVVPITLMSGRRFHSRPVYNKKPGQAW). C294 and C328 form a disulfide bridge. Disulfide bonds link C380–C437 and C387–C410. The V4 stretch occupies residues 387–410 (CNMTWFLNWVENKTNQTHGNYAPC). Residues 453–459 (NQTNITF) form a V5 region. The fusion peptide stretch occupies residues 502 to 522 (GVFVLGFLGFLATAGSAMGGA). The interval 565–581 (LQARVTAIEKYLKDQAQ) is immunosuppression. 3 N-linked (GlcNAc...) asparagine; by host glycosylation sites follow: N601, N610, and N626. Positions 647–668 (KLNSWDVFGNWFDLTSWIKYIQ) are MPER; binding to GalCer. Residues 670 to 690 (GVYIVVGIIGLRIAIYIVQLL) traverse the membrane as a helical segment. Residues 691–851 (SRLRKGYRPV…IRQGAEIALL (161 aa)) lie on the Cytoplasmic side of the membrane. Positions 697 to 700 (YRPV) match the YXXV motif; contains endocytosis signal motif. C763 carries the S-palmitoyl cysteine; by host lipid modification. The Di-leucine internalization motif signature appears at 850–851 (LL).

As to quaternary structure, the mature envelope protein (Env) consists of a homotrimer of non-covalently associated gp120-gp41 heterodimers. The resulting complex protrudes from the virus surface as a spike. There seems to be as few as 10 spikes on the average virion. Interacts with human CD4, CCR5 and CXCR4, to form a P4HB/PDI-CD4-CXCR4-gp120 complex. Gp120 also interacts with the C-type lectins CD209/DC-SIGN and CLEC4M/DC-SIGNR (collectively referred to as DC-SIGN(R)). Gp120 and gp41 interact with GalCer. In terms of assembly, the mature envelope protein (Env) consists of a homotrimer of non-covalently associated gp120-gp41 heterodimers. The resulting complex protrudes from the virus surface as a spike. There seems to be as few as 10 spikes on the average virion. In terms of processing, specific enzymatic cleavages in vivo yield mature proteins. Envelope glycoproteins are synthesized as an inactive precursor that is heavily N-glycosylated and processed likely by host cell furin in the Golgi to yield the mature SU and TM proteins. The cleavage site between SU and TM requires the minimal sequence [KR]-X-[KR]-R. Palmitoylation of the transmembrane protein and of Env polyprotein (prior to its proteolytic cleavage) is essential for their association with host cell membrane lipid rafts. Palmitoylation is therefore required for envelope trafficking to classical lipid rafts, but not for viral replication.

Its subcellular location is the virion membrane. The protein localises to the host cell membrane. It is found in the host endosome membrane. The surface protein gp120 (SU) attaches the virus to the host lymphoid cell by binding to the primary receptor CD4. This interaction induces a structural rearrangement creating a high affinity binding site for a chemokine coreceptor like CXCR4 and/or CCR5. This peculiar 2 stage receptor-interaction strategy allows gp120 to maintain the highly conserved coreceptor-binding site in a cryptic conformation, protected from neutralizing antibodies. Since CD4 also displays a binding site for the disulfide-isomerase P4HB/PDI, a P4HB/PDI-CD4-CXCR4-gp120 complex may form. In that complex, P4HB/PDI could reach and reduce gp120 disulfide bonds, causing major conformational changes in gp120. TXN, another PDI family member could also be involved in disulfide rearrangements in Env during fusion. These changes are transmitted to the transmembrane protein gp41 and are thought to activate its fusogenic potential by unmasking its fusion peptide. Functionally, the surface protein gp120 is a ligand for CD209/DC-SIGN and CLEC4M/DC-SIGNR, which are respectively found on dendritic cells (DCs), and on endothelial cells of liver sinusoids and lymph node sinuses. These interactions allow capture of viral particles at mucosal surfaces by these cells and subsequent transmission to permissive cells. DCs are professional antigen presenting cells, critical for host immunity by inducing specific immune responses against a broad variety of pathogens. They act as sentinels in various tissues where they take up antigen, process it, and present it to T-cells following migration to lymphoid organs. HIV subverts the migration properties of dendritic cells to gain access to CD4+ T-cells in lymph nodes. Virus transmission to permissive T-cells occurs either in trans (without DCs infection, through viral capture and transmission), or in cis (following DCs productive infection, through the usual CD4-gp120 interaction), thereby inducing a robust infection. In trans infection, bound virions remain infectious over days and it is proposed that they are not degraded, but protected in non-lysosomal acidic organelles within the DCs close to the cell membrane thus contributing to the viral infectious potential during DCs' migration from the periphery to the lymphoid tissues. On arrival at lymphoid tissues, intact virions recycle back to DCs' cell surface allowing virus transmission to CD4+ T-cells. Virion capture also seems to lead to MHC-II-restricted viral antigen presentation, and probably to the activation of HIV-specific CD4+ cells. In terms of biological role, the transmembrane protein gp41 (TM) acts as a class I viral fusion protein. Under the current model, the protein has at least 3 conformational states: pre-fusion native state, pre-hairpin intermediate state, and post-fusion hairpin state. During fusion of viral and target intracellular membranes, the coiled coil regions (heptad repeats) assume a trimer-of-hairpins structure, positioning the fusion peptide in close proximity to the C-terminal region of the ectodomain. The formation of this structure appears to drive apposition and subsequent fusion of viral and target cell membranes. Complete fusion occurs in host cell endosomes and is dynamin-dependent, however some lipid transfer might occur at the plasma membrane. The virus undergoes clathrin-dependent internalization long before endosomal fusion, thus minimizing the surface exposure of conserved viral epitopes during fusion and reducing the efficacy of inhibitors targeting these epitopes. Membranes fusion leads to delivery of the nucleocapsid into the cytoplasm. Its function is as follows. The envelope glycoprotein gp160 precursor down-modulates cell surface CD4 antigen by interacting with it in the endoplasmic reticulum and blocking its transport to the cell surface. The gp120-gp41 heterodimer seems to contribute to T-cell depletion during HIV-1 infection. The envelope glycoproteins expressed on the surface of infected cells induce apoptosis through an interaction with uninfected cells expressing the receptor (CD4) and the coreceptors CXCR4 or CCR5. This type of bystander killing may be obtained by at least three distinct mechanisms. First, the interaction between the 2 cells can induce cellular fusion followed by nuclear fusion within the syncytium. Syncytia are condemned to die from apoptosis. Second, the 2 interacting cells may not fuse entirely and simply exchange plasma membrane lipids, after a sort of hemifusion process, followed by rapid death. Third, it is possible that virus-infected cells, on the point of undergoing apoptosis, fuse with CD4-expressing cells, in which case apoptosis is rapidly transmitted from one cell to the other and thus occurs in a sort of contagious fashion. Functionally, the gp120-gp41 heterodimer allows rapid transcytosis of the virus through CD4 negative cells such as simple epithelial monolayers of the intestinal, rectal and endocervical epithelial barriers. Both gp120 and gp41 specifically recognize glycosphingolipids galactosyl-ceramide (GalCer) or 3' sulfo-galactosyl-ceramide (GalS) present in the lipid rafts structures of epithelial cells. Binding to these alternative receptors allows the rapid transcytosis of the virus through the epithelial cells. This transcytotic vesicle-mediated transport of virions from the apical side to the basolateral side of the epithelial cells does not involve infection of the cells themselves. This chain is Envelope glycoprotein gp160 (env), found in Human immunodeficiency virus type 2 subtype A (isolate D194) (HIV-2).